Here is a 433-residue protein sequence, read N- to C-terminus: N-lysine methyltransferase SMYD2 (433 aa).

Residues 7-241 (GGLERFCSPG…PGEEVFTSYI (235 aa)) form the SET domain. 17–19 (KGR) serves as a coordination point for S-adenosyl-L-methionine. Zn(2+) is bound by residues Cys52, Cys55, Cys65, Cys68, Cys74, Cys78, His86, and Cys90. An MYND-type zinc finger spans residues 52–90 (CEYCFTRKEGLSKCGRCKQAFYCNVECQKEDWPMHKLEC). S-adenosyl-L-methionine is bound by residues His137, 206–207 (NH), and 258–260 (YFF). Ser283 bears the Phosphoserine mark.

This sequence belongs to the class V-like SAM-binding methyltransferase superfamily. Interacts with RNA polymerase II and HELZ. Interacts with SIN3A and HDAC1. Interacts (via MYND-type zinc finger) with EPB41L3. Interacts (via SET domain) with p53/TP53. Interacts with RB1 and HSP90AA1.

The protein resides in the cytoplasm. The protein localises to the cytosol. It localises to the nucleus. It carries out the reaction L-lysyl(4)-[histone H3] + 3 S-adenosyl-L-methionine = N(6),N(6),N(6)-trimethyl-L-lysyl(4)-[histone H3] + 3 S-adenosyl-L-homocysteine + 3 H(+). The catalysed reaction is L-lysyl-[protein] + S-adenosyl-L-methionine = N(6)-methyl-L-lysyl-[protein] + S-adenosyl-L-homocysteine + H(+). In terms of biological role, protein-lysine N-methyltransferase that methylates both histones and non-histone proteins, including p53/TP53 and RB1. Specifically trimethylates histone H3 'Lys-4' (H3K4me3) in vivo. The activity requires interaction with HSP90alpha. Shows even higher methyltransferase activity on p53/TP53. Monomethylates 'Lys-370' of p53/TP53, leading to decreased DNA-binding activity and subsequent transcriptional regulation activity of p53/TP53. Monomethylates RB1 at 'Lys-860'. This chain is N-lysine methyltransferase SMYD2 (SMYD2), found in Homo sapiens (Human).